Here is a 352-residue protein sequence, read N- to C-terminus: Photosystem II D2 protein (352 aa).

Topologically, residues 1-31 (MTIAVGRAPVERGWFDVLDDWLKRDRFVFIG) are cytoplasmic. A helical transmembrane segment spans residues 32 to 53 (WSGLLLFPCAFMALGGWLTGTT). At 54–108 (FVTSWYTHGLASSYLEGANFLTVAVSSPADAFGHSLLFLWGPEAQGNLTRWFQIG) the chain is on the lumenal, thylakoid side. Residues 109–131 (GLWPFVALHGAFGLIGFMLRQFE) form a helical membrane-spanning segment. H117 provides a ligand contact to chlorophyll a. Q129 lines the pheophytin a pocket. Over 132-140 (ISRLVGIRP) the chain is Cytoplasmic. A helical membrane pass occupies residues 141–162 (YNAIAFSGPIAVFVSVFLMYPL). Residue N142 participates in pheophytin a binding. Over 163–190 (GQSSWFFAPSFGVAGIFRFILFLQGFHN) the chain is Lumenal, thylakoid. The helical transmembrane segment at 191 to 217 (WTLNPFHMMGVAGILGGALLCAIHGAT) threads the bilayer. H197 contributes to the chlorophyll a binding site. A plastoquinone is bound by residues H214 and F261. H214 is a Fe cation binding site. The Cytoplasmic portion of the chain corresponds to 218–265 (VENTLFEDGEDSNTFRAFEPTQAEETYSMVTANRFWSQIFGIAFSNKR). Residues 266–288 (WLHFFMLFVPVTGLWMSSVGIVG) traverse the membrane as a helical segment. H268 lines the Fe cation pocket. Topologically, residues 289–352 (LALNLRAYDF…EEVLPRGNAL (64 aa)) are lumenal, thylakoid.

The protein belongs to the reaction center PufL/M/PsbA/D family. In terms of assembly, PSII is composed of 1 copy each of membrane proteins PsbA, PsbB, PsbC, PsbD, PsbE, PsbF, PsbH, PsbI, PsbJ, PsbK, PsbL, PsbM, PsbT, PsbX, PsbY, PsbZ, Psb30/Ycf12, peripheral proteins PsbO, CyanoQ (PsbQ), PsbU, PsbV and a large number of cofactors. It forms dimeric complexes. The cofactor is The D1/D2 heterodimer binds P680, chlorophylls that are the primary electron donor of PSII, and subsequent electron acceptors. It shares a non-heme iron and each subunit binds pheophytin, quinone, additional chlorophylls, carotenoids and lipids. There is also a Cl(-1) ion associated with D1 and D2, which is required for oxygen evolution. The PSII complex binds additional chlorophylls, carotenoids and specific lipids..

It localises to the cellular thylakoid membrane. The enzyme catalyses 2 a plastoquinone + 4 hnu + 2 H2O = 2 a plastoquinol + O2. In terms of biological role, photosystem II (PSII) is a light-driven water:plastoquinone oxidoreductase that uses light energy to abstract electrons from H(2)O, generating O(2) and a proton gradient subsequently used for ATP formation. It consists of a core antenna complex that captures photons, and an electron transfer chain that converts photonic excitation into a charge separation. The D1/D2 (PsbA/PsbD) reaction center heterodimer binds P680, the primary electron donor of PSII as well as several subsequent electron acceptors. D2 is needed for assembly of a stable PSII complex. In Synechocystis sp. (strain ATCC 27184 / PCC 6803 / Kazusa), this protein is Photosystem II D2 protein.